The chain runs to 448 residues: DNA repair protein RadA (448 aa).

The C4-type zinc-finger motif lies at 10–27 (CQHCGFTSPKWLGKCVQC). Residue 96–103 (GSPGVGKS) coordinates ATP. Positions 253–257 (KNRFG) match the RadA KNRFG motif motif. Residues 351-448 (DVFINVSGGI…NAVGKIVEWM (98 aa)) are lon-protease-like.

The protein belongs to the RecA family. RadA subfamily.

In terms of biological role, DNA-dependent ATPase involved in processing of recombination intermediates, plays a role in repairing DNA breaks. Stimulates the branch migration of RecA-mediated strand transfer reactions, allowing the 3' invading strand to extend heteroduplex DNA faster. Binds ssDNA in the presence of ADP but not other nucleotides, has ATPase activity that is stimulated by ssDNA and various branched DNA structures, but inhibited by SSB. Does not have RecA's homology-searching function. The protein is DNA repair protein RadA of Helicobacter pylori (strain ATCC 700392 / 26695) (Campylobacter pylori).